A 502-amino-acid chain; its full sequence is Medium/long-chain-fatty-acid--CoA ligase FadD17 (502 aa).

This sequence belongs to the ATP-dependent AMP-binding enzyme family.

The enzyme catalyses a medium-chain fatty acid + ATP + CoA = a medium-chain fatty acyl-CoA + AMP + diphosphate. It catalyses the reaction a long-chain fatty acid + ATP + CoA = a long-chain fatty acyl-CoA + AMP + diphosphate. It functions in the pathway lipid metabolism; fatty acid biosynthesis. Functionally, catalyzes the activation of medium/long-chain fatty acids as acyl-coenzyme A (acyl-CoA), which are then transferred to the multifunctional polyketide synthase (PKS) type III for further chain extension. In Mycobacterium bovis (strain ATCC BAA-935 / AF2122/97), this protein is Medium/long-chain-fatty-acid--CoA ligase FadD17 (fadD17).